Here is a 435-residue protein sequence, read N- to C-terminus: tRNA(Ile)-lysidine synthase (435 aa).

25–30 (SGGLDS) lines the ATP pocket.

It belongs to the tRNA(Ile)-lysidine synthase family.

The protein localises to the cytoplasm. The catalysed reaction is cytidine(34) in tRNA(Ile2) + L-lysine + ATP = lysidine(34) in tRNA(Ile2) + AMP + diphosphate + H(+). Functionally, ligates lysine onto the cytidine present at position 34 of the AUA codon-specific tRNA(Ile) that contains the anticodon CAU, in an ATP-dependent manner. Cytidine is converted to lysidine, thus changing the amino acid specificity of the tRNA from methionine to isoleucine. The chain is tRNA(Ile)-lysidine synthase from Photobacterium profundum (strain SS9).